A 157-amino-acid polypeptide reads, in one-letter code: MAKHSDPNSKLIAENRRARFDYFIEEEIEAGIMLLGSEVKSLRQGGSNIGESYASVEEGELWLINGYIAPYLQAKTWGHEERRKRKLLVSRRELARLWTATAREGMTIVPIRMYFNDRGIVKLKIGIAKGKKLSDKRETSAKRDWSREKQRLLKQNS.

A compositionally biased stretch (basic and acidic residues) spans 136-151 (KRETSAKRDWSREKQR). Positions 136-157 (KRETSAKRDWSREKQRLLKQNS) are disordered.

It belongs to the SmpB family.

The protein resides in the cytoplasm. Its function is as follows. Required for rescue of stalled ribosomes mediated by trans-translation. Binds to transfer-messenger RNA (tmRNA), required for stable association of tmRNA with ribosomes. tmRNA and SmpB together mimic tRNA shape, replacing the anticodon stem-loop with SmpB. tmRNA is encoded by the ssrA gene; the 2 termini fold to resemble tRNA(Ala) and it encodes a 'tag peptide', a short internal open reading frame. During trans-translation Ala-aminoacylated tmRNA acts like a tRNA, entering the A-site of stalled ribosomes, displacing the stalled mRNA. The ribosome then switches to translate the ORF on the tmRNA; the nascent peptide is terminated with the 'tag peptide' encoded by the tmRNA and targeted for degradation. The ribosome is freed to recommence translation, which seems to be the essential function of trans-translation. This chain is SsrA-binding protein, found in Cereibacter sphaeroides (strain ATCC 17029 / ATH 2.4.9) (Rhodobacter sphaeroides).